A 444-amino-acid chain; its full sequence is Tubulin beta-9 chain (444 aa).

Residues glutamine 11, glutamate 69, serine 138, glycine 142, threonine 143, glycine 144, asparagine 204, and asparagine 226 each contribute to the GTP site. A Mg(2+)-binding site is contributed by glutamate 69.

The protein belongs to the tubulin family. In terms of assembly, dimer of alpha and beta chains. A typical microtubule is a hollow water-filled tube with an outer diameter of 25 nm and an inner diameter of 15 nM. Alpha-beta heterodimers associate head-to-tail to form protofilaments running lengthwise along the microtubule wall with the beta-tubulin subunit facing the microtubule plus end conferring a structural polarity. Microtubules usually have 13 protofilaments but different protofilament numbers can be found in some organisms and specialized cells. Interacts with TFCA. Mg(2+) is required as a cofactor.

The protein localises to the cytoplasm. The protein resides in the cytoskeleton. In terms of biological role, tubulin is the major constituent of microtubules, a cylinder consisting of laterally associated linear protofilaments composed of alpha- and beta-tubulin heterodimers. Microtubules grow by the addition of GTP-tubulin dimers to the microtubule end, where a stabilizing cap forms. Below the cap, tubulin dimers are in GDP-bound state, owing to GTPase activity of alpha-tubulin. The chain is Tubulin beta-9 chain (TUBB9) from Arabidopsis thaliana (Mouse-ear cress).